The sequence spans 571 residues: Potassium-transporting ATPase potassium-binding subunit (571 aa).

10 helical membrane passes run 7–27 (LQFA…GGYL), 66–86 (TYAL…YGIA), 137–157 (GLAV…AALI), 188–208 (FVVA…GFIV), 255–275 (IGNF…CFAF), 286–306 (WAVL…AMSF), 390–410 (VGLN…GLMV), 430–450 (TLYI…SVLI), 497–517 (IGVA…AIAG), and 538–558 (LFVG…FFPA).

The protein belongs to the KdpA family. As to quaternary structure, the system is composed of three essential subunits: KdpA, KdpB and KdpC.

The protein localises to the cell membrane. Its function is as follows. Part of the high-affinity ATP-driven potassium transport (or Kdp) system, which catalyzes the hydrolysis of ATP coupled with the electrogenic transport of potassium into the cytoplasm. This subunit binds the extracellular potassium ions and delivers the ions to the membrane domain of KdpB through an intramembrane tunnel. The sequence is that of Potassium-transporting ATPase potassium-binding subunit from Mycobacterium bovis (strain ATCC BAA-935 / AF2122/97).